The chain runs to 378 residues: Putative glutamate--cysteine ligase 2-1 (378 aa).

This sequence belongs to the glutamate--cysteine ligase type 2 family. YbdK subfamily.

The catalysed reaction is L-cysteine + L-glutamate + ATP = gamma-L-glutamyl-L-cysteine + ADP + phosphate + H(+). ATP-dependent carboxylate-amine ligase which exhibits weak glutamate--cysteine ligase activity. The protein is Putative glutamate--cysteine ligase 2-1 of Corynebacterium efficiens (strain DSM 44549 / YS-314 / AJ 12310 / JCM 11189 / NBRC 100395).